A 1024-amino-acid polypeptide reads, in one-letter code: RNA cytidine acetyltransferase (1024 aa).

287 to 296 provides a ligand contact to ATP; the sequence is GRGKSAALGL. An N6-acetyllysine modification is found at Lys-426. An ATP-binding site is contributed by Arg-470. An N-acetyltransferase domain is found at 558 to 753; it reads CLLPPVPPTQ…HSCIMLKTLA (196 aa). Residues 629-631 and 636-642 contribute to the acetyl-CoA site; these read IAV and QGMGYGS. Residues 702-1024 are required for localization to the nucleolus and midbody; the sequence is PAERLDYLGV…RKDMKLKRKK (323 aa). Thr-716 is modified (phosphothreonine). Acetyl-CoA is bound at residue Arg-725. 3 positions are modified to phosphoserine: Ser-934, Ser-984, and Ser-987. The tract at residues 990-1024 is disordered; the sequence is SDKKRKLETKQEPKQSKKLKKRDNNRKDMKLKRKK. The segment covering 1005–1024 has biased composition (basic residues); it reads SKKLKKRDNNRKDMKLKRKK.

This sequence belongs to the RNA cytidine acetyltransferase family. NAT10 subfamily. Part of the small subunit (SSU) processome, composed of more than 70 proteins and the RNA chaperone small nucleolar RNA (snoRNA) U3. Interacts with THUMPD1. Interacts with SUN1 (via N-terminus). Interacts with TERT.

Its subcellular location is the nucleus. It is found in the nucleolus. The catalysed reaction is a cytidine in 18S rRNA + acetyl-CoA + ATP + H2O = an N(4)-acetylcytidine in 18S rRNA + ADP + phosphate + CoA + H(+). It carries out the reaction a cytidine in tRNA + acetyl-CoA + ATP + H2O = an N(4)-acetylcytidine in tRNA + ADP + phosphate + CoA + H(+). It catalyses the reaction a cytidine in mRNA + acetyl-CoA + ATP + H2O = an N(4)-acetylcytidine in mRNA + ADP + phosphate + CoA + H(+). Functionally, RNA cytidine acetyltransferase that catalyzes the formation of N(4)-acetylcytidine (ac4C) modification on mRNAs, 18S rRNA and tRNAs. Catalyzes ac4C modification of a broad range of mRNAs, enhancing mRNA stability and translation. mRNA ac4C modification is frequently present within wobble cytidine sites and promotes translation efficiency. Mediates the formation of ac4C at position 1842 in 18S rRNA. May also catalyze the formation of ac4C at position 1337 in 18S rRNA. Required for early nucleolar cleavages of precursor rRNA at sites A0, A1 and A2 during 18S rRNA synthesis. Catalyzes the formation of ac4C in serine and leucine tRNAs. Requires the tRNA-binding adapter protein THUMPD1 for full tRNA acetyltransferase activity but not for 18S rRNA acetylation. In addition to RNA acetyltransferase activity, also able to acetylate lysine residues of proteins, such as histones, microtubules, p53/TP53 and MDM2, in vitro. The relevance of the protein lysine acetyltransferase activity is however unsure in vivo. Activates telomerase activity by stimulating the transcription of TERT, and may also regulate telomerase function by affecting the balance of telomerase subunit assembly, disassembly, and localization. Involved in the regulation of centrosome duplication by acetylating CENATAC during mitosis, promoting SASS6 proteasome degradation. Part of the small subunit (SSU) processome, first precursor of the small eukaryotic ribosomal subunit. During the assembly of the SSU processome in the nucleolus, many ribosome biogenesis factors, an RNA chaperone and ribosomal proteins associate with the nascent pre-rRNA and work in concert to generate RNA folding, modifications, rearrangements and cleavage as well as targeted degradation of pre-ribosomal RNA by the RNA exosome. This chain is RNA cytidine acetyltransferase, found in Mus musculus (Mouse).